Reading from the N-terminus, the 524-residue chain is Cytokinin dehydrogenase 4 (524 aa).

A signal peptide spans Met1–Ser26. N-linked (GlcNAc...) asparagine glycans are attached at residues Asn39 and Asn58. One can recognise an FAD-binding PCMH-type domain in the interval Thr60–Ala249. Residues Ala104, Gly106, and Gly108 each coordinate FAD. A Pros-8alpha-FAD histidine modification is found at His109. Positions 110 and 114 each coordinate FAD. N-linked (GlcNAc...) asparagine glycosylation occurs at Asn124. FAD is bound by residues Asp173, Ser178, Ser184, Ile188, and Ile239. An N-linked (GlcNAc...) asparagine glycan is attached at Asn411. FAD-binding residues include Tyr482, Ser517, and Gln520.

Belongs to the oxygen-dependent FAD-linked oxidoreductase family. Requires FAD as cofactor. Expressed in trichomes and in developing stomata of young growing leaves. Strong expression in stipules and in the root cap, but not detected in the root meristem.

The protein resides in the secreted. It is found in the extracellular space. It carries out the reaction N(6)-dimethylallyladenine + A + H2O = 3-methyl-2-butenal + adenine + AH2. Catalyzes the oxidation of cytokinins, a family of N(6)-substituted adenine derivatives that are plant hormones, where the substituent is an isopentenyl group. The polypeptide is Cytokinin dehydrogenase 4 (CKX4) (Arabidopsis thaliana (Mouse-ear cress)).